An 830-amino-acid chain; its full sequence is WD repeat-containing protein 75 (830 aa).

WD repeat units follow at residues 4-43, 47-86, 90-131, 145-184, 193-231, 237-276, 279-318, 324-362, and 376-423; these read EENIRVVRCGGSELNFRRAVFSADSKYIFCVSGDFVKVYS, EECVHILHGHRNLVTGIQLNPNNHLQLYSCSLDGTIKLWD, GILI…QLVS, KELSFVLDYINQSPKCIAFGNEGVYVAAVREFYLSVYFFK, LSSSRNKKHAKNNFTCVACHPTEDCIASGHMDGKIRLWR, KKYTYTCLHWHHDMVMDLAFSVTGTSLLSGGRESVLVEWR, TEKNKEFLPRLGATIEHISVSPAGDLFCTSHSDNKIIIIH, SAVIQGLVKDRSIFTGLMIDPRTKALVLNGKPGHLQFYS, and QQEY…KLWM. Residue lysine 123 forms a Glycyl lysine isopeptide (Lys-Gly) (interchain with G-Cter in SUMO2) linkage. Lysine 427 participates in a covalent cross-link: Glycyl lysine isopeptide (Lys-Gly) (interchain with G-Cter in SUMO2). WD repeat units lie at residues 430–474, 487–525, 529–569, and 574–611; these read GFIL…KVWI, GWTCDFVGSYHKYQATNCCFSEDGSLLAVSFEEIVTIWD, WELK…CCWN, and ALEWNAKLNVRVMEPDPNSENIAAISQSSVGSDLFVFK. Lysine 466 is modified (N6-acetyllysine). Phosphoserine is present on residues serine 664 and serine 672. Lysine 676 participates in a covalent cross-link: Glycyl lysine isopeptide (Lys-Gly) (interchain with G-Cter in SUMO2). Residues 763-806 are disordered; the sequence is SAKEIPEDVDMEEEKESEDSDEENDFTEKVQDTSNTGLGEDIIH. Positions 769 to 787 are enriched in acidic residues; the sequence is EDVDMEEEKESEDSDEEND. Phosphoserine is present on residues serine 779, serine 782, serine 796, and serine 811.

Component of the proposed t-UTP subcomplex of the ribosomal small subunit (SSU) processome. SSU processome is composed of more than 70 proteins and the RNA chaperone small nucleolar RNA (snoRNA) U3.

It localises to the nucleus. The protein localises to the nucleolus. In terms of biological role, ribosome biogenesis factor. Part of the small subunit (SSU) processome, first precursor of the small eukaryotic ribosomal subunit. During the assembly of the SSU processome in the nucleolus, many ribosome biogenesis factors, an RNA chaperone and ribosomal proteins associate with the nascent pre-rRNA and work in concert to generate RNA folding, modifications, rearrangements and cleavage as well as targeted degradation of pre-ribosomal RNA by the RNA exosome. Involved in nucleolar processing of pre-18S ribosomal RNA. Required for optimal pre-ribosomal RNA transcription by RNA polymerase I. In Homo sapiens (Human), this protein is WD repeat-containing protein 75.